The primary structure comprises 363 residues: Phospho-N-acetylmuramoyl-pentapeptide-transferase (363 aa).

Transmembrane regions (helical) follow at residues 15–33 (FTTL…SFIF), 82–102 (NTPT…LLIV), 106–126 (FYSM…IIGF), 147–167 (FILQ…NGYI), 183–203 (IVIF…VNLT), 207–227 (DGLA…EIFI), 233–253 (LIIY…FLKF), 260–280 (IFMG…ISIL), 285–305 (FTLF…IIQV), and 341–361 (IVEN…VLKI).

It belongs to the glycosyltransferase 4 family. MraY subfamily. Mg(2+) is required as a cofactor.

The protein localises to the cell inner membrane. It catalyses the reaction UDP-N-acetyl-alpha-D-muramoyl-L-alanyl-gamma-D-glutamyl-meso-2,6-diaminopimeloyl-D-alanyl-D-alanine + di-trans,octa-cis-undecaprenyl phosphate = di-trans,octa-cis-undecaprenyl diphospho-N-acetyl-alpha-D-muramoyl-L-alanyl-D-glutamyl-meso-2,6-diaminopimeloyl-D-alanyl-D-alanine + UMP. It functions in the pathway cell wall biogenesis; peptidoglycan biosynthesis. In terms of biological role, catalyzes the initial step of the lipid cycle reactions in the biosynthesis of the cell wall peptidoglycan: transfers peptidoglycan precursor phospho-MurNAc-pentapeptide from UDP-MurNAc-pentapeptide onto the lipid carrier undecaprenyl phosphate, yielding undecaprenyl-pyrophosphoryl-MurNAc-pentapeptide, known as lipid I. The sequence is that of Phospho-N-acetylmuramoyl-pentapeptide-transferase from Prochlorococcus marinus (strain MIT 9515).